Here is a 337-residue protein sequence, read N- to C-terminus: Eukaryotic translation initiation factor 3 subunit H (337 aa).

In terms of domain architecture, MPN spans 25-158 (VQIEGLAVLK…LKALKLSDSF (134 aa)). Serine 178 bears the Phosphoserine; by ATPK1 mark. Positions 267 to 278 (RRTENMARKSAG) are enriched in basic and acidic residues. The segment at 267–290 (RRTENMARKSAGEEPLPEEDPSNP) is disordered.

Belongs to the eIF-3 subunit H family. As to quaternary structure, component of the eukaryotic translation initiation factor 3 (eIF-3) complex. Interacts directly with TIF3A1, TIF3B1, TIF3C1, TIF3E1 and TIF3F1. Associates with the CSN (COP9 signalosome) complex. Binds to CSN1, CSN7 and CSN8. Interacts with ATPK1. Post-translationally, in response to auxin (NAA), phosphorylated at Ser-178 by ATPK1 and binds to polysomes via TOR signaling. This phosphorylation is repressed by Torin-1. As to expression, mostly expressed in roots and flowers, and, to a lower extent, in leaves, stems and siliques.

The protein resides in the cytoplasm. Functionally, component of the eukaryotic translation initiation factor 3 (eIF-3) complex, which is involved in protein synthesis of a specialized repertoire of mRNAs and, together with other initiation factors, stimulates binding of mRNA and methionyl-tRNAi to the 40S ribosome. The eIF-3 complex specifically targets and initiates translation of a subset of mRNAs involved in cell proliferation (Potential). Regulates translation initiation of specific 5' mRNAs harboring multiple upstream open reading frames (uORFs) in their 5' leader sequence (e.g. BETA-OHASE 2 and LHY). The polypeptide is Eukaryotic translation initiation factor 3 subunit H (TIF3H1) (Arabidopsis thaliana (Mouse-ear cress)).